Here is a 683-residue protein sequence, read N- to C-terminus: MPQQVRLSRENSVKRSRSLTKSFRGLFKFNSPGSPPSSAATSDSSEMSGAQGGRGNGLLGGRTKKASISPKSEAQFTQRNKSAESVVSDEGVAMVASAGAQFYGRGKHESSPNVLMTGGEEAARAAGRASAESIALSEGGPPSIDTKLERVTPSLIYPQNGRAKHSSQRSRSASVGRNKERGGPTPAPIGSIREEESKKAHKCIIQQEHFTVDENGNHQHSLKVLPLIVQDPESHKPKLFSFSAVFKSHKNGEDEELSDAFSILPDYSTVLEKTLVEPLSEVKIFSEAAQPDENGGRTEANQPKDMPKIVNKHAAIGNEELKLINNLSETIHVGMQGPDKHSSPPQPFTCKATKSKQVLAEKYGKCIGMIGQGAYGTVWVTCRSLPQDNQTETHYPTETYERNGKLFYAIKEIKPRADEPNEKFSTRLTSEFVIGHSLSGGAGGTKRLTSHPNILKVLDLMQAHDVFIEVFEFCPSGDLFSLLTRSSKTGSGLHPLEADCFMKQLLNGVRYMHDHGVAHCDLKPENILFTPNGTLKLCDFGSSSVFQTAWEKRVHFQTGAVGSEPYVAPEEFIPKREYDTRLVDCWSCGIIYCTMVLGHYLWKIAIKEKDQIYSAFLDDMTTRGEYYVFENMRHVNQEVNRCRKMCLYNIFQWDPKKRITIPKLLDTPWMRRTKCCVNYRAAI.

Disordered regions lie at residues 1–90 and 157–200; these read MPQQ…VSDE and YPQN…SKKA. Residues 36–48 show a composition bias toward low complexity; it reads PSSAATSDSSEMS. Positions 50–60 are enriched in gly residues; it reads AQGGRGNGLLG. Positions 69–85 are enriched in polar residues; sequence SPKSEAQFTQRNKSAES. One can recognise a Protein kinase domain in the interval 364-670; sequence GKCIGMIGQG…IPKLLDTPWM (307 aa). Residues 370 to 378 and Lys-411 each bind ATP; that span reads IGQGAYGTV. Asp-521 (proton acceptor) is an active-site residue.

It belongs to the protein kinase superfamily. CAMK Ser/Thr protein kinase family. NPR/HAL subfamily. HAL5 sub-subfamily.

It catalyses the reaction L-seryl-[protein] + ATP = O-phospho-L-seryl-[protein] + ADP + H(+). The catalysed reaction is L-threonyl-[protein] + ATP = O-phospho-L-threonyl-[protein] + ADP + H(+). The polypeptide is Probable serine/threonine-protein kinase HAL5-like (Eremothecium gossypii (strain ATCC 10895 / CBS 109.51 / FGSC 9923 / NRRL Y-1056) (Yeast)).